Here is a 363-residue protein sequence, read N- to C-terminus: DNA polymerase IV (363 aa).

The 184-residue stretch at 14 to 197 (IIHIDMDAFF…LPVEKFHGVG (184 aa)) folds into the UmuC domain. Residues Asp18 and Asp115 each coordinate Mg(2+). Glu116 is a catalytic residue.

It belongs to the DNA polymerase type-Y family. In terms of assembly, monomer. Mg(2+) serves as cofactor.

It localises to the cytoplasm. The enzyme catalyses DNA(n) + a 2'-deoxyribonucleoside 5'-triphosphate = DNA(n+1) + diphosphate. Functionally, poorly processive, error-prone DNA polymerase involved in untargeted mutagenesis. Copies undamaged DNA at stalled replication forks, which arise in vivo from mismatched or misaligned primer ends. These misaligned primers can be extended by PolIV. Exhibits no 3'-5' exonuclease (proofreading) activity. May be involved in translesional synthesis, in conjunction with the beta clamp from PolIII. In Lactococcus lactis subsp. lactis (strain IL1403) (Streptococcus lactis), this protein is DNA polymerase IV.